Consider the following 1012-residue polypeptide: Formate dehydrogenase subunit alpha (1012 aa).

A signal peptide (tat-type signal) is located at residues 1–35 (MLIKRRAFLKLTAAGATLSAFGGLGVDLAPAKAQA). In terms of domain architecture, 4Fe-4S Mo/W bis-MGD-type spans 45 to 103 (AKQTTSVCCYCSVGCGLIVHTDKKTNRAINVEGDPDHPINEGSLCAKGASTWQLAENER). Positions 52, 55, 59, and 89 each coordinate [4Fe-4S] cluster. Sec-193 contributes to the W-bis(molybdopterin guanine dinucleotide) binding site. Position 193 (Sec-193) is a non-standard amino acid, selenocysteine. 5 residues coordinate Ca(2+): Thr-393, Lys-395, Lys-398, Leu-428, and Asn-430. Cys-852 and Cys-879 form a disulfide bridge.

Belongs to the prokaryotic molybdopterin-containing oxidoreductase family. As to quaternary structure, heterodimer of alpha (FdhA) and beta (FdhB) subunits. [4Fe-4S] cluster is required as a cofactor. It depends on W-bis(molybdopterin guanine dinucleotide) as a cofactor. The disulfide bond is likely to be broken in the active form of this enzyme. Post-translationally, predicted to be exported by the Tat system. The position of the signal peptide cleavage has been experimentally proven.

It is found in the periplasm. It catalyses the reaction formate + NAD(+) = CO2 + NADH. Alpha chain of the formate dehydrogenase (FDH) catalyze the reversible two-electron oxidation of formate to carbon dioxide. FDH loses activity in the presence of air, but this activity can be restored. The alpha subunit of formate dehydrogenase forms the active site. In Megalodesulfovibrio gigas (Desulfovibrio gigas), this protein is Formate dehydrogenase subunit alpha.